The primary structure comprises 472 residues: Argininosuccinate lyase (472 aa).

Belongs to the lyase 1 family. Argininosuccinate lyase subfamily.

The protein resides in the cytoplasm. It catalyses the reaction 2-(N(omega)-L-arginino)succinate = fumarate + L-arginine. Its pathway is amino-acid biosynthesis; L-arginine biosynthesis; L-arginine from L-ornithine and carbamoyl phosphate: step 3/3. The sequence is that of Argininosuccinate lyase from Rhodococcus opacus (strain B4).